A 471-amino-acid polypeptide reads, in one-letter code: Putative multidrug resistance protein MdtD (471 aa).

Residues 1–12 lie on the Periplasmic side of the membrane; sequence MTDLPDSTRWQL. Residues 13–33 traverse the membrane as a helical segment; sequence WIVAFGFFMQSLDTTIVNTAI. Topologically, residues 34 to 48 are cytoplasmic; it reads PSMAQSLGESPLHMH. The helical transmembrane segment at 49 to 69 threads the bilayer; that stretch reads MVIVSYVLTVAVMLPASGWLA. At 70 to 76 the chain is on the periplasmic side; sequence DKVGVRN. The chain crosses the membrane as a helical span at residues 77-97; that stretch reads IFFTAIVLFTLGSLFCALSGT. The Cytoplasmic segment spans residues 98-101; that stretch reads LNEL. Residues 102–124 traverse the membrane as a helical segment; that stretch reads LLARALQGVGGAMMVPVGRLTVM. Residues 125–137 are Periplasmic-facing; that stretch reads KIVPREQYMAAMT. A helical membrane pass occupies residues 138 to 158; sequence FVTLPGQVGPLLGPALGGLLV. Residues 159-164 lie on the Cytoplasmic side of the membrane; sequence EYASWH. Residues 165 to 185 traverse the membrane as a helical segment; it reads WIFLINIPVGIIGAIATLMLM. At 186–196 the chain is on the periplasmic side; that stretch reads PNYTMQTRRFD. The chain crosses the membrane as a helical span at residues 197 to 217; sequence LSGFLLLAVGMAVLTLALDGS. The Cytoplasmic portion of the chain corresponds to 218-224; the sequence is KGTGLSP. Residues 225–245 form a helical membrane-spanning segment; it reads LAIAGLVAVGVVALVLYLLHA. Topologically, residues 246-262 are periplasmic; that stretch reads RNNNRALFSLKLFRTRT. A helical transmembrane segment spans residues 263-283; that stretch reads FSLGLAGSFAGRIGSGMLPFM. The Cytoplasmic portion of the chain corresponds to 284-285; that stretch reads TP. A helical membrane pass occupies residues 286–306; sequence VFLQIGLGFSPFHAGLMMIPM. The Periplasmic segment spans residues 307-341; sequence VLGSMGMKRIVVQVVNRFGYRRVLVATTLGLSLVT. Residues 342–362 form a helical membrane-spanning segment; the sequence is LLFMTTALLGWYYVLPFVLFL. Residues 363–395 lie on the Cytoplasmic side of the membrane; the sequence is QGMVNSTRFSSMNTLTLKDLPDNLASSGNSLLS. A helical transmembrane segment spans residues 396–416; that stretch reads MIMQLSMSIGVTIAGLLLGLF. Residues 417–430 lie on the Periplasmic side of the membrane; it reads GSQHVSVDSGTTQT. The chain crosses the membrane as a helical span at residues 431–451; it reads VFMYTWLSMAFIIALPAFIFA. The Cytoplasmic segment spans residues 452 to 471; that stretch reads RVPNDTHQNVAISRRKRSAQ.

Belongs to the major facilitator superfamily. TCR/Tet family.

The protein localises to the cell inner membrane. The polypeptide is Putative multidrug resistance protein MdtD (Shigella flexneri serotype 5b (strain 8401)).